Here is a 671-residue protein sequence, read N- to C-terminus: Receptor-interacting serine/threonine-protein kinase 1 (671 aa).

A Phosphoserine; by IKKA and IKKB modification is found at serine 6. A Protein kinase domain is found at 17–289 (FLESAELDSG…GIEEKFRPFY (273 aa)). At serine 20 the chain carries Phosphoserine; by autocatalysis. ATP is bound by residues 23 to 31 (LDSGGFGKV) and lysine 45. Serine 25 carries the post-translational modification Phosphoserine; by IKKA and IKKB. The Proton acceptor role is filled by aspartate 138. Phosphoserine; by RIPK3 and autocatalysis is present on serine 161. The residue at position 166 (serine 166) is a Phosphoserine; by autocatalysis. The interval 290–582 (LSQLEESVEE…QAIFDNTTSL (293 aa)) is interaction with SQSTM1. Serine 303 carries the phosphoserine modification. A phosphoserine; by MAP3K7 mark is found at serine 320, serine 331, and serine 333. Over residues 331-348 (SRSNSATEQPGSLHSSQG) the composition is skewed to polar residues. Residues 331–354 (SRSNSATEQPGSLHSSQGLGMGPV) are disordered. A Glycyl lysine isopeptide (Lys-Gly) (interchain with G-Cter in ubiquitin) cross-link involves residue lysine 377. A Phosphotyrosine modification is found at tyrosine 384. The tract at residues 389-455 (SRMDRQTKQQ…GNAVHQPSGL (67 aa)) is disordered. The segment covering 428-444 (NFQNTEGKGTAYSSAAS) has biased composition (polar residues). The RIP homotypic interaction motif (RHIM) signature appears at 531 to 547 (YTIYNSTGIQIGAYNYM). The Death domain occupies 583–669 (TDKHLDPIRE…DLLSSLIYVS (87 aa)). (Microbial infection) N-beta-linked (GlcNAc) arginine glycosylation occurs at arginine 603.

This sequence belongs to the protein kinase superfamily. TKL Ser/Thr protein kinase family. In terms of assembly, homodimer. Interacts (via RIP homotypic interaction motif) with RIPK3 (via RIP homotypic interaction motif); this interaction induces RIPK1 phosphorylation and formation of a RIPK1-RIPK3 necroptosis-inducing complex. Upon TNF-induced necrosis, the RIPK1-RIPK3 dimer further interacts with PGAM5 and MLKL; the formation of this complex leads to PGAM5 phosphorylation and increase in PGAM5 phosphatase activity. Interacts (via the death domain) with TNFRSF6 (via the death domain) and TRADD (via the death domain). Is recruited by TRADD to TNFRSF1A in a TNF-dependent process. Binds RNF216, EGFR, IKBKG, TRAF1, TRAF2 and TRAF3. Interacts with BNLF1. Interacts with SQSTM1 upon TNF-alpha stimulation. May interact with MAVS/IPS1. Interacts with ZFAND5. Interacts with RBCK1. Interacts with ZBP1. Interacts with BIRC2/c-IAP1, BIRC3/c-IAP2 and XIAP/BIRC4. Interacts (via kinase domain) with DAB2IP (via Ras-GAP domain); the interaction occurs in a TNF-alpha-dependent manner. Interacts with ARHGEF2. Interacts (via protein kinase domain) with RFFL; involved in RIPK1 ubiquitination. Interacts with RNF34; involved in RIPK1 ubiquitination. Interacts with TICAM1 and this interaction is enhanced in the presence of WDFY1. Interacts with PELI1. Interacts (via death domain) with CRADD (via death domain); the interaction is direct. Component of complex IIa composed of at least RIPK1, FADD and CASP8. Component of the AIM2 PANoptosome complex, a multiprotein complex that drives inflammatory cell death (PANoptosis). Interacts with MAP3K7, CFLAR, CASP8, FADD and NEMO. Interacts with TAX1BP1; this interaction negatively regulates RIPK1 ubiquitination. Interacts with GRB2. Interacts with DDX24; this interaction disrupts RLR signaling activation of IFN-dependent transcription factor IRF7. (Microbial infection) Interacts with mumps virus protein SH; this interaction inhibits downstream NF-kappa-B pathway activation. As to quaternary structure, (Microbial infection) Interacts with Murid herpesvirus 1 protein RIR1. In terms of assembly, (Microbial infection) Interacts (via RIP homotypic interaction motif) with herpes simplex virus 1/HHV-1 protein RIR1/ICP6 (via RIP homotypic interaction motif); this interaction prevents necroptosis activation. (Microbial infection) Interacts (via RIP homotypic interaction motif) with herpes simplex virus 2/HHV-2 protein RIR1/ICP10 (via RIP homotypic interaction motif); this interaction prevents necroptosis activation. In terms of processing, (Microbial infection) Proteolytically cleaved by S.flexneri OspD3 within the RIP homotypic interaction motif (RHIM), leading to its degradation and inhibition of necroptosis. Post-translationally, proteolytically cleaved by CASP8 at Asp-324. Cleavage is crucial for limiting TNF-induced apoptosis, necroptosis and inflammatory response. Cleavage abolishes NF-kappa-B activation and enhances the interaction of TRADD with FADD. Proteolytically cleaved by CASP6 during intrinsic apoptosis. RIPK1 and RIPK3 undergo reciprocal auto- and trans-phosphorylation. Phosphorylation of Ser-161 by RIPK3 is necessary for the formation of the necroptosis-inducing complex. Phosphorylation at Ser-25 represses its kinase activity and consequently prevents TNF-mediated RIPK1-dependent cell death. Phosphorylated at Ser-320 by MAP3K7 which requires prior ubiquitination with 'Lys-63'-linked chains by BIRC2/c-IAP1 and BIRC3/c-IAP2. This phosphorylation positively regulates RIPK1 interaction with RIPK3 to promote necroptosis but negatively regulates RIPK1 kinase activity and its interaction with FADD to mediate apoptosis. In terms of processing, deubiquitinated by USP7; this modification is required for TNF-alpha-induced apoptosis. Post-translationally, ubiquitinated with 'Lys-11'-, 'Lys-48'-, 'Lys-63'- and linear-linked type ubiquitin. Polyubiquitination with 'Lys-63'-linked chains by TRAF2 induces association with the IKK complex. Deubiquitination of 'Lys-63'-linked chains and polyubiquitination with 'Lys-48'-linked chains by TNFAIP3 leads to RIPK1 proteasomal degradation and consequently down-regulates TNF-alpha-induced NF-kappa-B signaling. 'Lys-48'-linked polyubiquitination by RFFL or RNF34 also promotes proteasomal degradation and negatively regulates TNF-alpha-induced NF-kappa-B signaling. Linear polyubiquitinated; the head-to-tail linear polyubiquitination ('Met-1'-linked) is mediated by the LUBAC complex and decreases protein kinase activity. Deubiquitination of linear polyubiquitin by CYLD promotes the kinase activity. Polyubiquitinated with 'Lys-48' and 'Lys-63'-linked chains by BIRC2/c-IAP1 and BIRC3/c-IAP2, leading to activation of NF-kappa-B. Ubiquitinated with 'Lys-63'-linked chains by PELI1. Ubiquitination at Lys-377 with 'Lys-63'-linked chains by BIRC2/c-IAP1 and BIRC3/c-IAP2 is essential for its phosphorylation at Ser-320 mediated by MAP3K7. This ubiquitination is required for NF-kB activation, suppresses RIPK1 kinase activity and plays a critical role in preventing cell death during embryonic development. (Microbial infection) Glycosylated at Arg-603 by enteropathogenic E.coli protein NleB1: arginine GlcNAcylation prevents homotypic/heterotypic death domain interactions.

The protein resides in the cytoplasm. Its subcellular location is the cell membrane. It carries out the reaction L-seryl-[protein] + ATP = O-phospho-L-seryl-[protein] + ADP + H(+). It catalyses the reaction L-threonyl-[protein] + ATP = O-phospho-L-threonyl-[protein] + ADP + H(+). Its activity is regulated as follows. Serine-threonine kinase activity is inhibited by linear polyubiquitination ('Met-1'-linked) by the LUBAC complex. Inhibited by necrostatins, including necrostatin-1, necrostatin-3 and necrostatin-4. Serine-threonine kinase which is a key regulator of TNF-mediated apoptosis, necroptosis and inflammatory pathways. Exhibits kinase activity-dependent functions that regulate cell death and kinase-independent scaffold functions regulating inflammatory signaling and cell survival. Has kinase-independent scaffold functions: upon binding of TNF to TNFR1, RIPK1 is recruited to the TNF-R1 signaling complex (TNF-RSC also known as complex I) where it acts as a scaffold protein promoting cell survival, in part, by activating the canonical NF-kappa-B pathway. Kinase activity is essential to regulate necroptosis and apoptosis, two parallel forms of cell death: upon activation of its protein kinase activity, regulates assembly of two death-inducing complexes, namely complex IIa (RIPK1-FADD-CASP8), which drives apoptosis, and the complex IIb (RIPK1-RIPK3-MLKL), which drives necroptosis. RIPK1 is required to limit CASP8-dependent TNFR1-induced apoptosis. In normal conditions, RIPK1 acts as an inhibitor of RIPK3-dependent necroptosis, a process mediated by RIPK3 component of complex IIb, which catalyzes phosphorylation of MLKL upon induction by ZBP1. Inhibits RIPK3-mediated necroptosis via FADD-mediated recruitment of CASP8, which cleaves RIPK1 and limits TNF-induced necroptosis. Required to inhibit apoptosis and necroptosis during embryonic development: acts by preventing the interaction of TRADD with FADD thereby limiting aberrant activation of CASP8. In addition to apoptosis and necroptosis, also involved in inflammatory response by promoting transcriptional production of pro-inflammatory cytokines, such as interleukin-6 (IL6). Phosphorylates RIPK3: RIPK1 and RIPK3 undergo reciprocal auto- and trans-phosphorylation. Phosphorylates DAB2IP at 'Ser-728' in a TNF-alpha-dependent manner, and thereby activates the MAP3K5-JNK apoptotic cascade. Required for ZBP1-induced NF-kappa-B activation in response to DNA damage. This Homo sapiens (Human) protein is Receptor-interacting serine/threonine-protein kinase 1.